A 111-amino-acid polypeptide reads, in one-letter code: Large ribosomal subunit protein uL22 (111 aa).

It belongs to the universal ribosomal protein uL22 family. As to quaternary structure, part of the 50S ribosomal subunit.

In terms of biological role, this protein binds specifically to 23S rRNA; its binding is stimulated by other ribosomal proteins, e.g. L4, L17, and L20. It is important during the early stages of 50S assembly. It makes multiple contacts with different domains of the 23S rRNA in the assembled 50S subunit and ribosome. Its function is as follows. The globular domain of the protein is located near the polypeptide exit tunnel on the outside of the subunit, while an extended beta-hairpin is found that lines the wall of the exit tunnel in the center of the 70S ribosome. The chain is Large ribosomal subunit protein uL22 from Clostridium beijerinckii (strain ATCC 51743 / NCIMB 8052) (Clostridium acetobutylicum).